We begin with the raw amino-acid sequence, 319 residues long: Homeobox protein Hox-B5a (319 aa).

The tract at residues 114–224 (SLLSPGSGDT…NTVGSEGQPP (111 aa)) is disordered. Residues 128-155 (RSSSPRSEQSGSGNLSSTNLSSSTNISS) are compositionally biased toward low complexity. The short motif at 226 to 231 (IFPWMR) is the Antp-type hexapeptide element. The segment at residues 244-303 (GKRARTAYTRYQTLELEKEFHFNRYLTRRRRIEIAHALCLTERQIKIWFQNRRMKWKKDN) is a DNA-binding region (homeobox).

The protein belongs to the Antp homeobox family.

It is found in the nucleus. In terms of biological role, sequence-specific transcription factor which is part of a developmental regulatory system that provides cells with specific positional identities on the anterior-posterior axis. The polypeptide is Homeobox protein Hox-B5a (hoxb5a) (Takifugu rubripes (Japanese pufferfish)).